Consider the following 88-residue polypeptide: MDLFKLFSGKPSSKEVAKDRLKLILIHDRSSIAPELLEVMKSDILKVISKYVIIDDDEVEVRLTKTEEVDASSPALIASIPIKKMKQR.

This sequence belongs to the MinE family.

Prevents the cell division inhibition by proteins MinC and MinD at internal division sites while permitting inhibition at polar sites. This ensures cell division at the proper site by restricting the formation of a division septum at the midpoint of the long axis of the cell. This Clostridium novyi (strain NT) protein is Cell division topological specificity factor.